Consider the following 357-residue polypeptide: uncharacterized protein (357 aa).

Residues 27-196 enclose the PNPLA domain; the sequence is LVCEGGGQRG…SDAIPVKEAA (170 aa). The GXGXXG motif lies at 31–36; that stretch reads GGGQRG. Positions 59–63 match the GXSXG motif; that stretch reads GTSAG. S61 functions as the Nucleophile in the catalytic mechanism. D183 serves as the catalytic Proton acceptor. Positions 183–185 match the DGA/G motif; sequence DGG.

Functionally, probable lipid hydrolase. This is an uncharacterized protein from Escherichia coli (strain K12).